The sequence spans 64 residues: Peptide Ctri9677 (64 aa).

The signal sequence occupies residues methionine 1–alanine 22. A Leucine amide modification is found at leucine 36. Residues serine 40–tyrosine 64 constitute a propeptide that is removed on maturation.

This sequence belongs to the non-disulfide-bridged peptide (NDBP) superfamily. Short antimicrobial peptide (group 4) family. Expressed by the venom gland.

Its subcellular location is the secreted. Antimicrobial peptide. This is Peptide Ctri9677 from Chaerilus tricostatus (Scorpion).